Reading from the N-terminus, the 305-residue chain is Ribonuclease HIII (305 aa).

Residues 91–305 (WSVIGSDEVG…ANTQKAQKLL (215 aa)) enclose the RNase H type-2 domain. The a divalent metal cation site is built by D97, E98, and D201.

It belongs to the RNase HII family. RnhC subfamily. Mn(2+) is required as a cofactor. It depends on Mg(2+) as a cofactor.

The protein resides in the cytoplasm. It carries out the reaction Endonucleolytic cleavage to 5'-phosphomonoester.. Endonuclease that specifically degrades the RNA of RNA-DNA hybrids. The protein is Ribonuclease HIII of Enterococcus faecalis (strain ATCC 700802 / V583).